Consider the following 943-residue polypeptide: Isoleucine--tRNA ligase (943 aa).

The short motif at 59 to 69 (PYANGQIHLGH) is the 'HIGH' region element. E577 is an L-isoleucyl-5'-AMP binding site. A 'KMSKS' region motif is present at residues 618 to 622 (KMSKS). ATP is bound at residue K621. Zn(2+) is bound by residues C906, C909, C926, and C929.

The protein belongs to the class-I aminoacyl-tRNA synthetase family. IleS type 1 subfamily. Monomer. Zn(2+) is required as a cofactor.

Its subcellular location is the cytoplasm. It carries out the reaction tRNA(Ile) + L-isoleucine + ATP = L-isoleucyl-tRNA(Ile) + AMP + diphosphate. Functionally, catalyzes the attachment of isoleucine to tRNA(Ile). As IleRS can inadvertently accommodate and process structurally similar amino acids such as valine, to avoid such errors it has two additional distinct tRNA(Ile)-dependent editing activities. One activity is designated as 'pretransfer' editing and involves the hydrolysis of activated Val-AMP. The other activity is designated 'posttransfer' editing and involves deacylation of mischarged Val-tRNA(Ile). This Xanthomonas axonopodis pv. citri (strain 306) protein is Isoleucine--tRNA ligase.